The chain runs to 405 residues: Argininosuccinate synthase (405 aa).

ATP is bound by residues 10–18 and A37; that span reads AYSGGLDTS. L-citrulline is bound by residues Y88 and S93. G118 contacts ATP. Residues T120, N124, and D125 each coordinate L-aspartate. Residue N124 coordinates L-citrulline. Residues R128, S179, S188, E264, and Y276 each contribute to the L-citrulline site.

This sequence belongs to the argininosuccinate synthase family. Type 1 subfamily. As to quaternary structure, homotetramer.

The protein localises to the cytoplasm. The catalysed reaction is L-citrulline + L-aspartate + ATP = 2-(N(omega)-L-arginino)succinate + AMP + diphosphate + H(+). It functions in the pathway amino-acid biosynthesis; L-arginine biosynthesis; L-arginine from L-ornithine and carbamoyl phosphate: step 2/3. This chain is Argininosuccinate synthase, found in Pseudomonas fluorescens (strain ATCC BAA-477 / NRRL B-23932 / Pf-5).